The following is a 618-amino-acid chain: Leucine aminopeptidase 2 (618 aa).

A peptide contacts are provided by residues 139–141 and 271–276; these read QCQ and PYGGME. His300 contributes to the Zn(2+) binding site. Residue Glu301 is the Proton acceptor of the active site. His304 and Glu323 together coordinate Zn(2+). Tyr388 (proton donor) is an active-site residue.

The protein belongs to the peptidase M1 family. It depends on Zn(2+) as a cofactor.

It localises to the cytoplasm. The protein localises to the nucleus. It catalyses the reaction an epoxide + H2O = an ethanediol. In terms of biological role, aminopeptidase that preferentially cleaves di- and tripeptides. Also has low epoxide hydrolase activity (in vitro). Can hydrolyze the epoxide leukotriene LTA(4) but it forms preferentially 5,6-dihydroxy-7,9,11,14-eicosatetraenoic acid rather than the cytokine leukotriene B(4) as the product compared to the homologous mammalian enzyme (in vitro). The protein is Leucine aminopeptidase 2 of Aspergillus niger (strain ATCC MYA-4892 / CBS 513.88 / FGSC A1513).